The following is a 612-amino-acid chain: Dihydroxy-acid dehydratase (612 aa).

Asp-81 is a Mg(2+) binding site. Cys-122 contacts [2Fe-2S] cluster. Asp-123 and Lys-124 together coordinate Mg(2+). Residue Lys-124 is modified to N6-carboxylysine. Cys-195 contributes to the [2Fe-2S] cluster binding site. Glu-492 contributes to the Mg(2+) binding site. The active-site Proton acceptor is Ser-518.

The protein belongs to the IlvD/Edd family. In terms of assembly, homodimer. It depends on [2Fe-2S] cluster as a cofactor. Requires Mg(2+) as cofactor.

It carries out the reaction (2R)-2,3-dihydroxy-3-methylbutanoate = 3-methyl-2-oxobutanoate + H2O. The enzyme catalyses (2R,3R)-2,3-dihydroxy-3-methylpentanoate = (S)-3-methyl-2-oxopentanoate + H2O. The protein operates within amino-acid biosynthesis; L-isoleucine biosynthesis; L-isoleucine from 2-oxobutanoate: step 3/4. It participates in amino-acid biosynthesis; L-valine biosynthesis; L-valine from pyruvate: step 3/4. In terms of biological role, functions in the biosynthesis of branched-chain amino acids. Catalyzes the dehydration of (2R,3R)-2,3-dihydroxy-3-methylpentanoate (2,3-dihydroxy-3-methylvalerate) into 2-oxo-3-methylpentanoate (2-oxo-3-methylvalerate) and of (2R)-2,3-dihydroxy-3-methylbutanoate (2,3-dihydroxyisovalerate) into 2-oxo-3-methylbutanoate (2-oxoisovalerate), the penultimate precursor to L-isoleucine and L-valine, respectively. The protein is Dihydroxy-acid dehydratase of Kocuria rhizophila (strain ATCC 9341 / DSM 348 / NBRC 103217 / DC2201).